The sequence spans 118 residues: Large ribosomal subunit protein bL19 (118 aa).

The protein belongs to the bacterial ribosomal protein bL19 family.

In terms of biological role, this protein is located at the 30S-50S ribosomal subunit interface and may play a role in the structure and function of the aminoacyl-tRNA binding site. This Citrifermentans bemidjiense (strain ATCC BAA-1014 / DSM 16622 / JCM 12645 / Bem) (Geobacter bemidjiensis) protein is Large ribosomal subunit protein bL19.